The following is a 442-amino-acid chain: 3-phosphoshikimate 1-carboxyvinyltransferase (442 aa).

The 3-phosphoshikimate site is built by Lys27, Ser28, and Arg32. Residue Lys27 coordinates phosphoenolpyruvate. 2 residues coordinate phosphoenolpyruvate: Gly100 and Arg128. 6 residues coordinate 3-phosphoshikimate: Ser174, Ser175, Gln176, Ser204, Asp321, and Lys348. Gln176 provides a ligand contact to phosphoenolpyruvate. Asp321 serves as the catalytic Proton acceptor. Phosphoenolpyruvate-binding residues include Arg352, Arg394, and Lys424.

Belongs to the EPSP synthase family. In terms of assembly, monomer.

The protein localises to the cytoplasm. The catalysed reaction is 3-phosphoshikimate + phosphoenolpyruvate = 5-O-(1-carboxyvinyl)-3-phosphoshikimate + phosphate. Its pathway is metabolic intermediate biosynthesis; chorismate biosynthesis; chorismate from D-erythrose 4-phosphate and phosphoenolpyruvate: step 6/7. In terms of biological role, catalyzes the transfer of the enolpyruvyl moiety of phosphoenolpyruvate (PEP) to the 5-hydroxyl of shikimate-3-phosphate (S3P) to produce enolpyruvyl shikimate-3-phosphate and inorganic phosphate. This chain is 3-phosphoshikimate 1-carboxyvinyltransferase, found in Herminiimonas arsenicoxydans.